Reading from the N-terminus, the 388-residue chain is Probable aspartic-type endopeptidase MCYG_06955 (388 aa).

A signal peptide spans 1–21 (MMGPFFYFTAYVSLLFAFTQA). Residues Asn-82 and Asn-104 are each glycosylated (N-linked (GlcNAc...) asparagine). Residues 96–384 (FVNEITVGND…DYDGPKIGFA (289 aa)) enclose the Peptidase A1 domain. Asp-112 is a catalytic residue. Asn-209 and Asn-261 each carry an N-linked (GlcNAc...) asparagine glycan. The active site involves Asp-278. Asn-315 and Asn-320 each carry an N-linked (GlcNAc...) asparagine glycan.

The protein belongs to the peptidase A1 family.

The protein resides in the secreted. Probable aspartic-type endopeptidase which contributes to virulence. The protein is Probable aspartic-type endopeptidase MCYG_06955 of Arthroderma otae (strain ATCC MYA-4605 / CBS 113480) (Microsporum canis).